The chain runs to 149 residues: UPAR/Ly6 domain-containing protein bou (149 aa).

A signal peptide spans 1-31 (MWPPKHAHIGWLSSLALVVLLMSLQMVMVSG). Residues 32 to 126 (IECYVCDTSD…YTCDTDGCNA (95 aa)) are Extracellular-facing. Disulfide bonds link cysteine 34–cysteine 74, cysteine 37–cysteine 48, cysteine 65–cysteine 91, cysteine 100–cysteine 115, and cysteine 119–cysteine 124. An N-linked (GlcNAc...) asparagine glycan is attached at asparagine 64. Asparagine 125 is lipidated: GPI-anchor amidated asparagine. The propeptide at 126–149 (AAGRLELEWGVAAALLTLTWLLRH) is removed in mature form. Residues 127-147 (AGRLELEWGVAAALLTLTWLL) traverse the membrane as a helical segment. At 148–149 (RH) the chain is on the cytoplasmic side.

In terms of processing, GPI-anchored.

It is found in the cell membrane. The protein localises to the cell junction. It localises to the septate junction. The protein resides in the cytoplasm. Its subcellular location is the cell cortex. It is found in the secreted. The protein localises to the apicolateral cell membrane. Functionally, involved in tracheal paracellular barrier functions mediated by epithelial cell septate junctions. Involved in paracellular barrier functions mediated by glial cell septate junctions in the peripheral nervous system, including the chordotonal organs, but not the hemolymph-brain barrier (the insect blood-brain barrier) of the central nervous system. Required for septate junction assembly, possibly by organizing the preassembly and transport of septate junction proteins such as dlg1/disks large 1, Nrx-IV/Neurexin-IV and the claudin protein kune. Involved in chitin fiber organization during tracheal development. Secreted, possibly in association with extracellular vesicles, to act non-autonomously on tissues distant from its site of expression. This Drosophila melanogaster (Fruit fly) protein is UPAR/Ly6 domain-containing protein bou.